Consider the following 74-residue polypeptide: UPF0435 protein GK0418 (74 aa).

The protein belongs to the UPF0435 family.

This is UPF0435 protein GK0418 from Geobacillus kaustophilus (strain HTA426).